A 301-amino-acid chain; its full sequence is Protoheme IX farnesyltransferase (301 aa).

A run of 9 helical transmembrane segments spans residues 16 to 36 (VVALIVFTALVGMFLAIPGMP), 41 to 61 (IQSGALGFLGIWLAAAAAAAI), 93 to 113 (VFAGVLITLSMTILTLWVNLI), 114 to 134 (TAVLTFTSLIGYAVIYTVYLK), 141 to 161 (IVIGGLAGAMPPMLGWAAVTG), 172 to 192 (SLLVAIIFVWTPPHFWALAIF), 217 to 237 (QILLYTVILSVVTLLPVATGM), 238 to 258 (SGVFYLGAALVLDAVFLWYAW), and 273 to 293 (FGYSIVYLMALFAFLMFDHWL).

It belongs to the UbiA prenyltransferase family. Protoheme IX farnesyltransferase subfamily.

It localises to the cell inner membrane. It carries out the reaction heme b + (2E,6E)-farnesyl diphosphate + H2O = Fe(II)-heme o + diphosphate. The protein operates within porphyrin-containing compound metabolism; heme O biosynthesis; heme O from protoheme: step 1/1. Functionally, converts heme B (protoheme IX) to heme O by substitution of the vinyl group on carbon 2 of heme B porphyrin ring with a hydroxyethyl farnesyl side group. The sequence is that of Protoheme IX farnesyltransferase from Xylella fastidiosa (strain Temecula1 / ATCC 700964).